The chain runs to 74 residues: High-potential iron-sulfur protein (74 aa).

[4Fe-4S] cluster-binding residues include C36, C39, C53, and C67.

The protein belongs to the high-potential iron-sulfur protein (HiPIP) family. As to quaternary structure, homodimer.

Specific class of high-redox-potential 4Fe-4S ferredoxins. Functions in anaerobic electron transport in most purple and in some other photosynthetic bacteria and in at least one genus (Paracoccus) of halophilic, denitrifying bacteria. This is High-potential iron-sulfur protein (hip) from Rubrivivax gelatinosus (Rhodocyclus gelatinosus).